The primary structure comprises 128 residues: Small ribosomal subunit protein uS11 (128 aa).

The protein belongs to the universal ribosomal protein uS11 family. Part of the 30S ribosomal subunit. Interacts with proteins S7 and S18. Binds to IF-3.

In terms of biological role, located on the platform of the 30S subunit, it bridges several disparate RNA helices of the 16S rRNA. Forms part of the Shine-Dalgarno cleft in the 70S ribosome. This is Small ribosomal subunit protein uS11 from Wolbachia pipientis wMel.